The chain runs to 212 residues: Ribosomal RNA small subunit methyltransferase G (212 aa).

Residues G80, L85, 131–132 (AE), and R146 each bind S-adenosyl-L-methionine.

Belongs to the methyltransferase superfamily. RNA methyltransferase RsmG family.

Its subcellular location is the cytoplasm. The enzyme catalyses guanosine(527) in 16S rRNA + S-adenosyl-L-methionine = N(7)-methylguanosine(527) in 16S rRNA + S-adenosyl-L-homocysteine. Specifically methylates the N7 position of guanine in position 527 of 16S rRNA. The protein is Ribosomal RNA small subunit methyltransferase G of Xylella fastidiosa (strain 9a5c).